A 192-amino-acid polypeptide reads, in one-letter code: Elongation factor P (192 aa).

It belongs to the elongation factor P family.

The protein resides in the cytoplasm. Its pathway is protein biosynthesis; polypeptide chain elongation. Involved in peptide bond synthesis. Stimulates efficient translation and peptide-bond synthesis on native or reconstituted 70S ribosomes in vitro. Probably functions indirectly by altering the affinity of the ribosome for aminoacyl-tRNA, thus increasing their reactivity as acceptors for peptidyl transferase. This Borrelia turicatae (strain 91E135) protein is Elongation factor P.